Reading from the N-terminus, the 262-residue chain is Acyl-[acyl-carrier-protein]--UDP-N-acetylglucosamine O-acyltransferase (262 aa).

This sequence belongs to the transferase hexapeptide repeat family. LpxA subfamily. In terms of assembly, homotrimer.

The protein localises to the cytoplasm. The enzyme catalyses a (3R)-hydroxyacyl-[ACP] + UDP-N-acetyl-alpha-D-glucosamine = a UDP-3-O-[(3R)-3-hydroxyacyl]-N-acetyl-alpha-D-glucosamine + holo-[ACP]. It participates in glycolipid biosynthesis; lipid IV(A) biosynthesis; lipid IV(A) from (3R)-3-hydroxytetradecanoyl-[acyl-carrier-protein] and UDP-N-acetyl-alpha-D-glucosamine: step 1/6. In terms of biological role, involved in the biosynthesis of lipid A, a phosphorylated glycolipid that anchors the lipopolysaccharide to the outer membrane of the cell. This chain is Acyl-[acyl-carrier-protein]--UDP-N-acetylglucosamine O-acyltransferase, found in Burkholderia thailandensis (strain ATCC 700388 / DSM 13276 / CCUG 48851 / CIP 106301 / E264).